Consider the following 83-residue polypeptide: Hainantoxin-III 2 (83 aa).

Positions 1-21 are cleaved as a signal peptide; that stretch reads MKASMYLALAGLVLLFVVGYA. Residues 22 to 48 constitute a propeptide that is removed on maturation; sequence SESEEKEFPRELLSKIFAVDDFKGEER. 3 cysteine pairs are disulfide-bonded: Cys50/Cys65, Cys57/Cys70, and Cys64/Cys77. Leu81 is modified (leucine amide).

It belongs to the neurotoxin 10 (Hwtx-1) family. 15 (Hntx-3) subfamily. As to quaternary structure, monomer. As to expression, expressed by the venom gland.

The protein localises to the secreted. Selective antagonist of neuronal tetrodotoxin (TTX)-sensitive voltage-gated sodium channels (IC(50)=1270 nM on Nav1.1/SCN1A, 270 nM on Nav1.2/SCN2A, 491 nM on Nav1.3/SCN3A and 232 nM on Nav1.7/SCN9A). This toxin suppress Nav1.7 current amplitude without significantly altering the activation, inactivation, and repriming kinetics. Short extreme depolarizations partially activate the toxin-bound channel, indicating voltage-dependent inhibition of this toxin. This toxin increases the deactivation of the Nav1.7 current after extreme depolarizations. The toxin-Nav1.7 complex is gradually dissociated upon prolonged strong depolarizations in a voltage-dependent manner, and the unbound toxin rebinds to Nav1.7 after a long repolarization. Moreover, analysis of chimeric channels showed that the DIIS3-S4 linker is critical for toxin binding to Nav1.7. These data are consistent with this toxin interacting with Nav1.7 site 4 and trapping the domain II voltage sensor in the closed state. In Cyriopagopus hainanus (Chinese bird spider), this protein is Hainantoxin-III 2.